The chain runs to 117 residues: Immunoglobulin heavy variable 1-45 (117 aa).

Positions 1–19 are cleaved as a signal peptide; it reads MDWTWRILFLVAAVTDAYS. A framework-1 region spans residues 20 to 44; that stretch reads QMQLVQSGAEVKKTGSSVKVSCKAS. Positions 20 to 117 constitute an Ig-like domain; sequence QMQLVQSGAE…EDTAMYYCAR (98 aa). An intrachain disulfide couples Cys-41 to Cys-115. The tract at residues 45 to 52 is complementarity-determining-1; it reads GYTFTYRY. Residues 53–69 are framework-2; sequence LHWVRQAPGQALEWMGW. The tract at residues 70–77 is complementarity-determining-2; sequence ITPFNGNT. Residues 78 to 115 form a framework-3 region; it reads NYAQKFQDRVTITRDRSMSTAYMELSSLRSEDTAMYYC. Residues 116–117 form a complementarity-determining-3 region; it reads AR.

Immunoglobulins are composed of two identical heavy chains and two identical light chains; disulfide-linked.

It localises to the secreted. The protein resides in the cell membrane. Functionally, v region of the variable domain of immunoglobulin heavy chains that participates in the antigen recognition. Immunoglobulins, also known as antibodies, are membrane-bound or secreted glycoproteins produced by B lymphocytes. In the recognition phase of humoral immunity, the membrane-bound immunoglobulins serve as receptors which, upon binding of a specific antigen, trigger the clonal expansion and differentiation of B lymphocytes into immunoglobulins-secreting plasma cells. Secreted immunoglobulins mediate the effector phase of humoral immunity, which results in the elimination of bound antigens. The antigen binding site is formed by the variable domain of one heavy chain, together with that of its associated light chain. Thus, each immunoglobulin has two antigen binding sites with remarkable affinity for a particular antigen. The variable domains are assembled by a process called V-(D)-J rearrangement and can then be subjected to somatic hypermutations which, after exposure to antigen and selection, allow affinity maturation for a particular antigen. This is Immunoglobulin heavy variable 1-45 from Homo sapiens (Human).